The sequence spans 171 residues: N5-carboxyaminoimidazole ribonucleotide mutase (171 aa).

Ser10, Asp13, and Arg40 together coordinate substrate.

This sequence belongs to the AIR carboxylase family. Class I subfamily.

It carries out the reaction 5-carboxyamino-1-(5-phospho-D-ribosyl)imidazole + H(+) = 5-amino-1-(5-phospho-D-ribosyl)imidazole-4-carboxylate. It participates in purine metabolism; IMP biosynthesis via de novo pathway; 5-amino-1-(5-phospho-D-ribosyl)imidazole-4-carboxylate from 5-amino-1-(5-phospho-D-ribosyl)imidazole (N5-CAIR route): step 2/2. Catalyzes the conversion of N5-carboxyaminoimidazole ribonucleotide (N5-CAIR) to 4-carboxy-5-aminoimidazole ribonucleotide (CAIR). In Thermotoga maritima (strain ATCC 43589 / DSM 3109 / JCM 10099 / NBRC 100826 / MSB8), this protein is N5-carboxyaminoimidazole ribonucleotide mutase.